We begin with the raw amino-acid sequence, 32 residues long: Protamine-2 (32 aa).

Positions proline 1–arginine 32 are disordered.

In terms of tissue distribution, testis.

It is found in the nucleus. The protein localises to the chromosome. Its function is as follows. Protamines substitute for histones in the chromatin of sperm during the haploid phase of spermatogenesis. They compact sperm DNA into a highly condensed, stable and inactive complex. The polypeptide is Protamine-2 (Oncorhynchus mykiss (Rainbow trout)).